The chain runs to 101 residues: UPF0235 protein CJA_0091 (101 aa).

This sequence belongs to the UPF0235 family.

The polypeptide is UPF0235 protein CJA_0091 (Cellvibrio japonicus (strain Ueda107) (Pseudomonas fluorescens subsp. cellulosa)).